Reading from the N-terminus, the 300-residue chain is N-acetylmuramic acid 6-phosphate etherase (300 aa).

Residues 57 to 220 (IAVAFQCGGR…TTGAMIRTGK (164 aa)) form the SIS domain. Glutamate 85 (proton donor) is an active-site residue. The active site involves glutamate 116.

Belongs to the GCKR-like family. MurNAc-6-P etherase subfamily. Homodimer.

It carries out the reaction N-acetyl-D-muramate 6-phosphate + H2O = N-acetyl-D-glucosamine 6-phosphate + (R)-lactate. It participates in amino-sugar metabolism; 1,6-anhydro-N-acetylmuramate degradation. Its pathway is amino-sugar metabolism; N-acetylmuramate degradation. It functions in the pathway cell wall biogenesis; peptidoglycan recycling. Functionally, specifically catalyzes the cleavage of the D-lactyl ether substituent of MurNAc 6-phosphate, producing GlcNAc 6-phosphate and D-lactate. Together with AnmK, is also required for the utilization of anhydro-N-acetylmuramic acid (anhMurNAc) either imported from the medium or derived from its own cell wall murein, and thus plays a role in cell wall recycling. This is N-acetylmuramic acid 6-phosphate etherase from Aliivibrio salmonicida (strain LFI1238) (Vibrio salmonicida (strain LFI1238)).